The chain runs to 483 residues: Glycogen synthase (483 aa).

Lys15 is a binding site for ADP-alpha-D-glucose.

The protein belongs to the glycosyltransferase 1 family. Bacterial/plant glycogen synthase subfamily.

The enzyme catalyses [(1-&gt;4)-alpha-D-glucosyl](n) + ADP-alpha-D-glucose = [(1-&gt;4)-alpha-D-glucosyl](n+1) + ADP + H(+). It functions in the pathway glycan biosynthesis; glycogen biosynthesis. Synthesizes alpha-1,4-glucan chains using ADP-glucose. The protein is Glycogen synthase of Petrotoga mobilis (strain DSM 10674 / SJ95).